The chain runs to 260 residues: Putative ABC transporter ATP-binding protein SCO3161 (260 aa).

An ABC transporter domain is found at 16-246 (LDVSGLAFAY…DDLMRAHRLE (231 aa)). 49–56 (GPNGAGKT) lines the ATP pocket.

Belongs to the ABC transporter superfamily.

It localises to the cell membrane. In terms of biological role, probably part of an ABC transporter complex. Responsible for energy coupling to the transport system. The sequence is that of Putative ABC transporter ATP-binding protein SCO3161 from Streptomyces coelicolor (strain ATCC BAA-471 / A3(2) / M145).